A 179-amino-acid polypeptide reads, in one-letter code: Adenine phosphoribosyltransferase (179 aa).

It belongs to the purine/pyrimidine phosphoribosyltransferase family. Homodimer.

It localises to the cytoplasm. It carries out the reaction AMP + diphosphate = 5-phospho-alpha-D-ribose 1-diphosphate + adenine. Its pathway is purine metabolism; AMP biosynthesis via salvage pathway; AMP from adenine: step 1/1. Functionally, catalyzes a salvage reaction resulting in the formation of AMP, that is energically less costly than de novo synthesis. This is Adenine phosphoribosyltransferase from Bradyrhizobium diazoefficiens (strain JCM 10833 / BCRC 13528 / IAM 13628 / NBRC 14792 / USDA 110).